The chain runs to 157 residues: Ribosomal RNA large subunit methyltransferase H (157 aa).

Residues L75, G106, and 125–130 (FSELTF) each bind S-adenosyl-L-methionine.

Belongs to the RNA methyltransferase RlmH family. As to quaternary structure, homodimer.

The protein resides in the cytoplasm. It catalyses the reaction pseudouridine(1915) in 23S rRNA + S-adenosyl-L-methionine = N(3)-methylpseudouridine(1915) in 23S rRNA + S-adenosyl-L-homocysteine + H(+). Functionally, specifically methylates the pseudouridine at position 1915 (m3Psi1915) in 23S rRNA. The chain is Ribosomal RNA large subunit methyltransferase H from Malacoplasma penetrans (strain HF-2) (Mycoplasma penetrans).